The sequence spans 874 residues: Trimodular acetylaranotin synthesis protein ataIMG (874 aa).

The interval methionine 1–isoleucine 339 is aminotransferase ataI. Residues arginine 20–isoleucine 39 form a disordered region. Positions phenylalanine 23–threonine 37 are enriched in polar residues. The interval serine 340–threonine 668 is O-methyltransferase ataM. Aspartate 625 lines the S-adenosyl-L-methionine pocket. Residues leucine 669–histidine 874 are glutathione S-transferase ataG. The region spanning lysine 699 to threonine 766 is the GST N-terminal domain. In terms of domain architecture, GST C-terminal spans aspartate 739 to histidine 874.

The protein in the N-terminal section; belongs to the class-I pyridoxal-phosphate-dependent aminotransferase family. This sequence in the 2nd section; belongs to the class I-like SAM-binding methyltransferase superfamily. Cation-independent O-methyltransferase family. It in the C-terminal section; belongs to the GST superfamily. Pyridoxal 5'-phosphate serves as cofactor.

The enzyme catalyses RX + glutathione = an S-substituted glutathione + a halide anion + H(+). The protein operates within mycotoxin biosynthesis. Functionally, trimodular acetylaranotin synthesis protein; part of the gene cluster that mediates the biosynthesis of acetylaranotin, a member of the epipolythiodioxopiperazine (ETP) class of toxins characterized by a disulfide-bridged cyclic dipeptide. The first step of acetylaranotin biosynthesis is performed by the NRPS ataP which produces diketopiperazine cyclo-L-Phe-L-Phe via the condensation of 2 phenylalanines (L-Phe). The ataC domain of ataTC then catalyzes the formation of bishydroxylation of cyclo-L-Phe-L-Phe. The glutathione S-transferase domain ataG in ataIMG further catalyzes the conjugation of two glutathiones to the bishydroxylated intermediate. Next, the dipeptidase ataJ removes the Glu residues. The following step is performed by the carbon sulfur lyase domain ataI of ataIMG which may convert the bis-cysteinyl adduct to yield an epidithiol intermediate. The ataT domain from ataTC then catalyzes the oxidation of the free dithiols, followed by a cyclization step catalyzed by the cytochrome P450 ataF. AtaF probably acts as an epoxidase to promote a dual epoxidation formation at C8 and C9 along with C8' and C9', followed by the spontaneous nucleophilic attack of the amide nitrogens N10 and N10' to yield an intermediate with the pyrrolidine partial structure. The final steps of acetylaranotin biosynthesis involve the acetylation and ring rearrangement of an epitetrathiodiketopiperazine intermediate to produce acetylaranotin. AtaH probably catalyzes the acetylation of epitetrathiodiketopiperazine to produce a diacetate and ataY is responsible for the formation of the dihydrooxepin moiety that converts the diacetate intermediate to acetylaranotin via acetylapoaranotin. Both enzymes could function independently in the absence of the other. The acetylaranotin bis-thiomethyltransferase ataS located outside of acetylaranotin gene cluster is the main thiomethyltransferase responsible for converting acetylaranotin and its related intermediates to their methylated forms. This chain is Trimodular acetylaranotin synthesis protein ataIMG, found in Aspergillus terreus (strain NIH 2624 / FGSC A1156).